Reading from the N-terminus, the 490-residue chain is 7-ethoxycoumarin O-deethylase (490 aa).

Cysteine 432 contacts heme.

The protein belongs to the cytochrome P450 family. Heme serves as cofactor.

Capable of dealkylating a model xenobiotic compound, 7-ethoxycoumarin. Metabolizes with high efficiency a wide range of xenobiotics, including alkoxycoumarins, alkoxyresorufins, and several herbicides of the class of phenylureas. Catalyzes the double N-dealkylation (oxidative N-demethylation) of phenylureas such as chlortoluron and isoproturon with turnover rates comparable to those reported for physiological substrates and produces non-phytotoxic compounds. Could be used for control of herbicide tolerance and selectivity, as well as soil and groundwater bioremediation. The sequence is that of 7-ethoxycoumarin O-deethylase (CYP76B1) from Helianthus tuberosus (Jerusalem artichoke).